A 75-amino-acid polypeptide reads, in one-letter code: Sec-independent protein translocase protein TatA (75 aa).

Residues 1–21 (MGISIWQLLIVLGIVILLFGT) traverse the membrane as a helical segment. The segment at 41-75 (SMSDEEEKNAEQQPLEKQNAEQQAQAEDKPKEKQG) is disordered. Positions 56–65 (EKQNAEQQAQ) are enriched in low complexity. Positions 66–75 (AEDKPKEKQG) are enriched in basic and acidic residues.

This sequence belongs to the TatA/E family. In terms of assembly, the Tat system comprises two distinct complexes: a TatABC complex, containing multiple copies of TatA, TatB and TatC subunits, and a separate TatA complex, containing only TatA subunits. Substrates initially bind to the TatABC complex, which probably triggers association of the separate TatA complex to form the active translocon.

It is found in the cell inner membrane. Part of the twin-arginine translocation (Tat) system that transports large folded proteins containing a characteristic twin-arginine motif in their signal peptide across membranes. TatA could form the protein-conducting channel of the Tat system. The sequence is that of Sec-independent protein translocase protein TatA from Marinobacter nauticus (strain ATCC 700491 / DSM 11845 / VT8) (Marinobacter aquaeolei).